The primary structure comprises 181 residues: Protein GrpE (181 aa).

Polar residues predominate over residues 1 to 13 (MENTQENPATQSA). The tract at residues 1–34 (MENTQENPATQSAEDIGSAKQAAQGAAPAAEAAD) is disordered. Low complexity predominate over residues 19–34 (AKQAAQGAAPAAEAAD).

This sequence belongs to the GrpE family. Homodimer.

The protein localises to the cytoplasm. Functionally, participates actively in the response to hyperosmotic and heat shock by preventing the aggregation of stress-denatured proteins, in association with DnaK and GrpE. It is the nucleotide exchange factor for DnaK and may function as a thermosensor. Unfolded proteins bind initially to DnaJ; upon interaction with the DnaJ-bound protein, DnaK hydrolyzes its bound ATP, resulting in the formation of a stable complex. GrpE releases ADP from DnaK; ATP binding to DnaK triggers the release of the substrate protein, thus completing the reaction cycle. Several rounds of ATP-dependent interactions between DnaJ, DnaK and GrpE are required for fully efficient folding. In Burkholderia vietnamiensis (strain G4 / LMG 22486) (Burkholderia cepacia (strain R1808)), this protein is Protein GrpE.